Here is a 315-residue protein sequence, read N- to C-terminus: MANLKSIRDRIQSVKNTQKITEAMRLVAAAKVRRAQEQVIATRPFADRLAQVLYGLQARLRFEEANLPLLRRREVKKVALLVVSGDRGLCGAYNTNVIKRAAERSKELKAEGIDYTFVLVGRKAIQYFQRREQPIDATYTGLEQVPTAAEASQIADELLSLFLSESVDRVELVYTKFVSLISSRPVVQTLLPLDPQGLEAQDDEIFRLTTRGGRFEVQREKVSSATQSMPQDMIFEQDPLQILDALLPLYLNNQLLRALQESAASELAARMTAMNNASDNAKELIKGLSMTYNKARQAAITQEILEVVGGAEALK.

This sequence belongs to the ATPase gamma chain family. As to quaternary structure, F-type ATPases have 2 components, CF(1) - the catalytic core - and CF(0) - the membrane proton channel. CF(1) has five subunits: alpha(3), beta(3), gamma(1), delta(1), epsilon(1). CF(0) has three main subunits: a, b and c.

Its subcellular location is the cellular thylakoid membrane. Its function is as follows. Produces ATP from ADP in the presence of a proton gradient across the membrane. The gamma chain is believed to be important in regulating ATPase activity and the flow of protons through the CF(0) complex. This is ATP synthase gamma chain from Cyanothece sp. (strain PCC 7425 / ATCC 29141).